The chain runs to 265 residues: Orotidine 5'-phosphate decarboxylase (265 aa).

Substrate-binding positions include aspartate 38, 60-62 (KTH), 91-100 (DRKFADIGNT), tyrosine 213, and arginine 232. The active-site Proton donor is lysine 93.

The protein belongs to the OMP decarboxylase family.

It catalyses the reaction orotidine 5'-phosphate + H(+) = UMP + CO2. The protein operates within pyrimidine metabolism; UMP biosynthesis via de novo pathway; UMP from orotate: step 2/2. This chain is Orotidine 5'-phosphate decarboxylase (pyrG), found in Rhizopus oryzae (Mucormycosis agent).